The primary structure comprises 88 residues: Small ribosomal subunit protein bS16c (88 aa).

Belongs to the bacterial ribosomal protein bS16 family.

The protein localises to the plastid. Its subcellular location is the chloroplast. The protein is Small ribosomal subunit protein bS16c of Jasminum nudiflorum (Winter jasmine).